We begin with the raw amino-acid sequence, 1407 residues long: DNA-directed RNA polymerase subunit beta' (1407 aa).

Zn(2+)-binding residues include Cys-70, Cys-72, Cys-85, and Cys-88. Mg(2+) is bound by residues Asp-460, Asp-462, and Asp-464. Zn(2+)-binding residues include Cys-814, Cys-888, Cys-895, and Cys-898. The residue at position 972 (Lys-972) is an N6-acetyllysine.

This sequence belongs to the RNA polymerase beta' chain family. In terms of assembly, the RNAP catalytic core consists of 2 alpha, 1 beta, 1 beta' and 1 omega subunit. When a sigma factor is associated with the core the holoenzyme is formed, which can initiate transcription. Mg(2+) serves as cofactor. Zn(2+) is required as a cofactor.

It catalyses the reaction RNA(n) + a ribonucleoside 5'-triphosphate = RNA(n+1) + diphosphate. Functionally, DNA-dependent RNA polymerase catalyzes the transcription of DNA into RNA using the four ribonucleoside triphosphates as substrates. The chain is DNA-directed RNA polymerase subunit beta' from Escherichia coli O6:H1 (strain CFT073 / ATCC 700928 / UPEC).